Reading from the N-terminus, the 140-residue chain is FLYWCH family member 2 (140 aa).

2 disordered regions span residues methionine 1–phenylalanine 39 and histidine 84–leucine 140. A Phosphoserine modification is found at serine 21. The segment covering proline 98 to aspartate 114 has biased composition (basic and acidic residues). Positions alanine 118 to glutamate 127 are enriched in low complexity.

The sequence is that of FLYWCH family member 2 (FLYWCH2) from Homo sapiens (Human).